Here is a 250-residue protein sequence, read N- to C-terminus: tRNA (guanine-N(1)-)-methyltransferase (250 aa).

Residues Gly-116 and 136 to 141 contribute to the S-adenosyl-L-methionine site; that span reads IGDYVL.

This sequence belongs to the RNA methyltransferase TrmD family. Homodimer.

It is found in the cytoplasm. It carries out the reaction guanosine(37) in tRNA + S-adenosyl-L-methionine = N(1)-methylguanosine(37) in tRNA + S-adenosyl-L-homocysteine + H(+). Its function is as follows. Specifically methylates guanosine-37 in various tRNAs. The polypeptide is tRNA (guanine-N(1)-)-methyltransferase (Pseudomonas putida (strain GB-1)).